A 116-amino-acid chain; its full sequence is Methionine-R-sulfoxide reductase B1 (116 aa).

One can recognise a MsrB domain in the interval 1–106 (MSFCSFFGGE…FSSSLKFVPK (106 aa)). Zn(2+) is bound by residues C23, C26, C71, and C74. U95 acts as the Nucleophile in catalysis. U95 is a non-standard amino acid (selenocysteine).

Belongs to the MsrB Met sulfoxide reductase family. It depends on Zn(2+) as a cofactor. Truncated MSRB1/SEPX1 proteins produced by failed UGA/Sec decoding are ubiquitinated by the CRL2(FEM1C) E3 ubiquitin-protein ligase complex.

Its subcellular location is the cytoplasm. It localises to the nucleus. The protein resides in the cytoskeleton. It catalyses the reaction L-methionyl-[protein] + [thioredoxin]-disulfide + H2O = L-methionyl-(R)-S-oxide-[protein] + [thioredoxin]-dithiol. The catalysed reaction is [thioredoxin]-disulfide + L-methionine + H2O = L-methionine (R)-S-oxide + [thioredoxin]-dithiol. In terms of biological role, methionine-sulfoxide reductase that specifically reduces methionine (R)-sulfoxide back to methionine. While in many cases, methionine oxidation is the result of random oxidation following oxidative stress, methionine oxidation is also a post-translational modification that takes place on specific residue. Acts as a regulator of actin assembly by reducing methionine (R)-sulfoxide mediated by MICALs (MICAL1, MICAL2 or MICAL3) on actin, thereby promoting filament repolymerization. Plays a role in innate immunity by reducing oxidized actin, leading to actin repolymerization in macrophages. This is Methionine-R-sulfoxide reductase B1 (MSRB1) from Pongo abelii (Sumatran orangutan).